Consider the following 191-residue polypeptide: Ribosome maturation factor RimM (191 aa).

The 78-residue stretch at 114–191 folds into the PRC barrel domain; it reads EDEYYWVDLI…RIVVDWQPDY (78 aa).

The protein belongs to the RimM family. As to quaternary structure, binds ribosomal protein uS19.

It localises to the cytoplasm. Functionally, an accessory protein needed during the final step in the assembly of 30S ribosomal subunit, possibly for assembly of the head region. Essential for efficient processing of 16S rRNA. May be needed both before and after RbfA during the maturation of 16S rRNA. It has affinity for free ribosomal 30S subunits but not for 70S ribosomes. This chain is Ribosome maturation factor RimM, found in Paracidovorax citrulli (strain AAC00-1) (Acidovorax citrulli).